A 511-amino-acid chain; its full sequence is GMP synthase [glutamine-hydrolyzing] (511 aa).

One can recognise a Glutamine amidotransferase type-1 domain in the interval 5 to 195; the sequence is MILVLDFGGQ…LYNICGCKGD (191 aa). Cys82 (nucleophile) is an active-site residue. Active-site residues include His169 and Glu171. One can recognise a GMPS ATP-PPase domain in the interval 196 to 386; that stretch reads WKMSSFVENS…LGIPEDLVWR (191 aa). 223–229 lines the ATP pocket; the sequence is SGGVDSS.

As to quaternary structure, homodimer.

It carries out the reaction XMP + L-glutamine + ATP + H2O = GMP + L-glutamate + AMP + diphosphate + 2 H(+). It functions in the pathway purine metabolism; GMP biosynthesis; GMP from XMP (L-Gln route): step 1/1. Catalyzes the synthesis of GMP from XMP. The sequence is that of GMP synthase [glutamine-hydrolyzing] from Ruminiclostridium cellulolyticum (strain ATCC 35319 / DSM 5812 / JCM 6584 / H10) (Clostridium cellulolyticum).